The primary structure comprises 403 residues: Tubby-like F-box protein 6 (403 aa).

Residues 50–105 enclose the F-box domain; sequence SCWAQLPPELLREVLVRIEESEVWWPSRRDVVACAGVCRSWRGITKEIVRVPEASG.

The protein belongs to the TUB family. As to expression, ubiquitous.

This chain is Tubby-like F-box protein 6 (TULP6), found in Oryza sativa subsp. japonica (Rice).